Reading from the N-terminus, the 307-residue chain is Atrochrysone carboxyl ACP thioesterase (307 aa).

H104, H106, D108, and H109 together coordinate Zn(2+). The active-site Proton donor/acceptor is D108.

It belongs to the metallo-beta-lactamase superfamily. Zn(2+) serves as cofactor.

It carries out the reaction atrochrysone carboxyl-[ACP] + H2O = atrochrysone carboxylate + holo-[ACP] + H(+). The protein operates within secondary metabolite biosynthesis. Functionally, atrochrysone carboxyl ACP thioesterase; part of the gene cluster that mediates the biosynthesis of monodictyphenone, a prenyl xanthone derivative. The pathway begins with the synthesis of atrochrysone thioester by the polyketide synthase (PKS) mdpG. The atrochrysone carboxyl ACP thioesterase mdpF then breaks the thioester bond and releases the atrochrysone carboxylic acid from mdpG. The atrochrysone carboxylic acid is then converted to atrochrysone which is further transformed into emodin anthrone. The next step is performed by the anthrone oxygenase mdpH that catalyzes the oxidation of emodinanthrone to emodin. Emodin is further modified to yield monodictyphenone via several steps involving mdpB, mdpC mdpJ, mdpK and mdpL. The short chain dehydrogenase mdpC converts the tautomers of emodin hydroquinone into the 3-hydroxy-3,4-dihydroan-thracen-1(2H)-one derivative. These enzymes with xptA, xptB and xptC are also proposed to be involved in the synthesis of shamixanthone from emodin. Especially, direct reduction of emodin by the short chain dehydrogenase mdpC followed by dehydration catalyzed by the scytalone dehydratase-like protein mdpB gives loss of oxygen and formation of chrysophanol intermediate in two simple steps. This Emericella nidulans (strain FGSC A4 / ATCC 38163 / CBS 112.46 / NRRL 194 / M139) (Aspergillus nidulans) protein is Atrochrysone carboxyl ACP thioesterase.